The chain runs to 280 residues: METIATRLAILPFPEIDPVIFTIGPLAVRWYGLAYVVGILLGWFYARRIVQNAALWRNGTPACNLTQLDDFLLWAAGGIVLGGRIGYILFYDLGSILDDPLRAIQIWNGGMSFHGGLVGTTLAMIIFARRNAIPIWSLFDVVAAVVPIGLFFGRIANFINGELWGRLSSVPWAVVFPTGGPFARHPSQLYEAALEGLVLLAVLAWFVYRRKALKIPGLVTGIFVCGYAASRIFVEFFREPDAQIGYLAGDWLTMGMVLSVPMALIGIWAIARARSAAAAA.

Helical transmembrane passes span Trp30–Val50, Phe71–Tyr91, Ile106–Ile126, and Ala132–Phe152. Residue Arg154 participates in a 1,2-diacyl-sn-glycero-3-phospho-(1'-sn-glycerol) binding. A run of 3 helical transmembrane segments spans residues Gln188 to Tyr208, Gly217 to Phe237, and Trp251 to Ala271.

This sequence belongs to the Lgt family.

The protein resides in the cell inner membrane. It catalyses the reaction L-cysteinyl-[prolipoprotein] + a 1,2-diacyl-sn-glycero-3-phospho-(1'-sn-glycerol) = an S-1,2-diacyl-sn-glyceryl-L-cysteinyl-[prolipoprotein] + sn-glycerol 1-phosphate + H(+). The protein operates within protein modification; lipoprotein biosynthesis (diacylglyceryl transfer). Catalyzes the transfer of the diacylglyceryl group from phosphatidylglycerol to the sulfhydryl group of the N-terminal cysteine of a prolipoprotein, the first step in the formation of mature lipoproteins. This chain is Phosphatidylglycerol--prolipoprotein diacylglyceryl transferase, found in Sinorhizobium medicae (strain WSM419) (Ensifer medicae).